A 1183-amino-acid chain; its full sequence is Rab11 family-interacting protein 3 (1183 aa).

The interval A423–T448 is disordered. Basic and acidic residues predominate over residues L431–K441. EF-hand domains follow at residues E706–E741 and Y738–E773. The Ca(2+) site is built by D719, D721, D723, E730, D751, S753, and D762. Positions E902 to Q1121 form a coiled coil. Residues E911–Q1015 are ARF-binding domain (ABD). The segment at K1005–C1044 is disordered. An FIP-RBD domain is found at Q1121 to K1183.

The protein resides in the recycling endosome membrane. It is found in the cytoplasm. Its subcellular location is the cytoskeleton. It localises to the microtubule organizing center. The protein localises to the centrosome. The protein resides in the cleavage furrow. It is found in the midbody. Its subcellular location is the golgi apparatus membrane. It localises to the golgi apparatus. The protein localises to the trans-Golgi network membrane. In terms of biological role, downstream effector molecule for Rab11 GTPase which acts as a regulator of endocytic trafficking, cytokinesis and intracellular ciliogenesis by participating in membrane delivery. In Danio rerio (Zebrafish), this protein is Rab11 family-interacting protein 3 (rab11fip3).